The primary structure comprises 461 residues: Cysteine--tRNA ligase (461 aa).

C28 is a binding site for Zn(2+). The 'HIGH' region motif lies at 30-40; that stretch reads MTVYDYCHLGH. Zn(2+) contacts are provided by C212, H237, and E241. The short motif at 269-273 is the 'KMSKS' region element; it reads KMSKS. K272 contacts ATP.

This sequence belongs to the class-I aminoacyl-tRNA synthetase family. As to quaternary structure, monomer. It depends on Zn(2+) as a cofactor.

The protein localises to the cytoplasm. The catalysed reaction is tRNA(Cys) + L-cysteine + ATP = L-cysteinyl-tRNA(Cys) + AMP + diphosphate. This chain is Cysteine--tRNA ligase, found in Aromatoleum aromaticum (strain DSM 19018 / LMG 30748 / EbN1) (Azoarcus sp. (strain EbN1)).